The following is a 271-amino-acid chain: Neurexophilin-1 (271 aa).

The N-terminal stretch at 1–21 (MQAACWYVLLLLQPTVYLVTC) is a signal peptide. Residues 22 to 97 (ANLTNGGKSE…WDWLRNSTDL (76 aa)) form an II region. 6 N-linked (GlcNAc...) asparagine glycosylation sites follow: asparagine 23, asparagine 68, asparagine 93, asparagine 146, asparagine 156, and asparagine 162. An III region spans residues 98 to 176 (QEPRPRAKRR…LVPPTKIVEF (79 aa)). The segment at 177 to 185 (DLAQQTVID) is IV (linker domain). Positions 186–271 (AKDSKSFNCR…HSDTPYFPSG (86 aa)) are v (Cys-rich).

The protein belongs to the neurexophilin family. May be proteolytically processed at the boundary between the N-terminal non-conserved and the central conserved domain in neuron-like cells. As to expression, brain, only in a scattered subpopulation of neurons that probably represent inhibitory interneurons.

The protein localises to the secreted. In terms of biological role, may be signaling molecules that resemble neuropeptides. Ligand for alpha-neurexins. In Mus musculus (Mouse), this protein is Neurexophilin-1 (Nxph1).